A 541-amino-acid polypeptide reads, in one-letter code: Chaperonin GroEL 1 (541 aa).

ATP contacts are provided by residues 29–32 (TLGP), 86–90 (DGTTT), glycine 413, 477–479 (NAA), and aspartate 493.

Belongs to the chaperonin (HSP60) family. Forms a cylinder of 14 subunits composed of two heptameric rings stacked back-to-back. Interacts with the co-chaperonin GroES.

Its subcellular location is the cytoplasm. It carries out the reaction ATP + H2O + a folded polypeptide = ADP + phosphate + an unfolded polypeptide.. Functionally, together with its co-chaperonin GroES, plays an essential role in assisting protein folding. The GroEL-GroES system forms a nano-cage that allows encapsulation of the non-native substrate proteins and provides a physical environment optimized to promote and accelerate protein folding. The protein is Chaperonin GroEL 1 of Paenarthrobacter aurescens (strain TC1).